The chain runs to 275 residues: 4-hydroxy-tetrahydrodipicolinate reductase (275 aa).

Residue 12-17 participates in NAD(+) binding; that stretch reads GAAGRM. An NADP(+)-binding site is contributed by Arg39. Residues 102–104 and 126–129 contribute to the NAD(+) site; these read GTT and SGNM. His160 acts as the Proton donor/acceptor in catalysis. His161 provides a ligand contact to (S)-2,3,4,5-tetrahydrodipicolinate. Lys164 functions as the Proton donor in the catalytic mechanism. 170–171 is a (S)-2,3,4,5-tetrahydrodipicolinate binding site; the sequence is GT.

It belongs to the DapB family.

Its subcellular location is the cytoplasm. It carries out the reaction (S)-2,3,4,5-tetrahydrodipicolinate + NAD(+) + H2O = (2S,4S)-4-hydroxy-2,3,4,5-tetrahydrodipicolinate + NADH + H(+). The enzyme catalyses (S)-2,3,4,5-tetrahydrodipicolinate + NADP(+) + H2O = (2S,4S)-4-hydroxy-2,3,4,5-tetrahydrodipicolinate + NADPH + H(+). Its pathway is amino-acid biosynthesis; L-lysine biosynthesis via DAP pathway; (S)-tetrahydrodipicolinate from L-aspartate: step 4/4. Its function is as follows. Catalyzes the conversion of 4-hydroxy-tetrahydrodipicolinate (HTPA) to tetrahydrodipicolinate. This chain is 4-hydroxy-tetrahydrodipicolinate reductase, found in Agrobacterium fabrum (strain C58 / ATCC 33970) (Agrobacterium tumefaciens (strain C58)).